Consider the following 172-residue polypeptide: Shikimate kinase (172 aa).

Residue 11 to 16 (GAGKST) coordinates ATP. Ser-15 is a binding site for Mg(2+). Substrate is bound by residues Asp-33, Arg-57, and Gly-79. Residue Arg-117 coordinates ATP. Arg-136 is a binding site for substrate. Arg-153 lines the ATP pocket.

Belongs to the shikimate kinase family. In terms of assembly, monomer. The cofactor is Mg(2+).

The protein localises to the cytoplasm. The enzyme catalyses shikimate + ATP = 3-phosphoshikimate + ADP + H(+). It participates in metabolic intermediate biosynthesis; chorismate biosynthesis; chorismate from D-erythrose 4-phosphate and phosphoenolpyruvate: step 5/7. Functionally, catalyzes the specific phosphorylation of the 3-hydroxyl group of shikimic acid using ATP as a cosubstrate. This Pseudomonas putida (strain ATCC 700007 / DSM 6899 / JCM 31910 / BCRC 17059 / LMG 24140 / F1) protein is Shikimate kinase.